A 428-amino-acid chain; its full sequence is Folylpolyglutamate synthase (428 aa).

49-52 lines the ATP pocket; that stretch reads GKGS. Position 73 (S73) interacts with Mg(2+). The (6R)-5,10-methylenetetrahydrofolyl-(gamma-L-Glu)n site is built by F75 and R82. Mg(2+)-binding residues include E143 and H170. Residue K185 is modified to N6-carboxylysine. ATP contacts are provided by residues N264, R300, and 313–316; that span reads DGAH. S417 contacts (6R)-5,10-methylenetetrahydrofolyl-(gamma-L-Glu)n.

This sequence belongs to the folylpolyglutamate synthase family. Monomer. Mg(2+) is required as a cofactor.

The catalysed reaction is (6S)-5,6,7,8-tetrahydrofolyl-(gamma-L-Glu)(n) + L-glutamate + ATP = (6S)-5,6,7,8-tetrahydrofolyl-(gamma-L-Glu)(n+1) + ADP + phosphate + H(+). It catalyses the reaction (6R)-5,10-methylenetetrahydrofolyl-(gamma-L-Glu)(n) + L-glutamate + ATP = (6R)-5,10-methylenetetrahydrofolyl-(gamma-L-Glu)(n+1) + ADP + phosphate + H(+). The enzyme catalyses 10-formyltetrahydrofolyl-(gamma-L-Glu)(n) + L-glutamate + ATP = 10-formyltetrahydrofolyl-(gamma-L-Glu)(n+1) + ADP + phosphate + H(+). Competitively inhibited by adenosine 5'-(3-thio)triphosphate and beta,gamma-methylene-ATP. In terms of biological role, involved in the conversion of folates to polyglutamate derivatives, and likely functions in the retention of cellular folate pools. Catalyzes successive MgATP-dependent additions of glutamate to a pteroylmonoglutamate substrate, with a high preference for 5,10-methylenetetrahydrofolate (mTHF). Thus, metabolizes mTHF to the tetraglutamate derivative, but longer glutamate chain length products are not observed. Tetrahydrofolate (H4PteGlu) and 10-formyl-H4PteGlu are poorer folate substrates. In contrast to E.coli FolC, this enzyme does not display dihydrofolate synthase activity. The chain is Folylpolyglutamate synthase from Lacticaseibacillus casei (Lactobacillus casei).